The following is a 505-amino-acid chain: Serine/threonine-protein kinase D (505 aa).

The Protein kinase domain maps to 9-271 (YEIVKSLGSG…AMYQALHSLI (263 aa)). ATP contacts are provided by residues 15 to 23 (LGSGGFGDT) and lysine 40. Residue aspartate 136 is the Proton acceptor of the active site. The region spanning 436–505 (GASATIGGIP…GWIASQLVNF (70 aa)) is the SH3b domain.

Belongs to the protein kinase superfamily. Ser/Thr protein kinase family.

The enzyme catalyses L-seryl-[protein] + ATP = O-phospho-L-seryl-[protein] + ADP + H(+). It carries out the reaction L-threonyl-[protein] + ATP = O-phospho-L-threonyl-[protein] + ADP + H(+). This chain is Serine/threonine-protein kinase D (spkD), found in Synechocystis sp. (strain ATCC 27184 / PCC 6803 / Kazusa).